Consider the following 1035-residue polypeptide: Eukaryotic translation initiation factor 3 subunit A (1035 aa).

The stretch at 92–121 (LKKFIELAEKKVTEAQAKADEIQSSLESAA) forms a coiled coil. Residues 339–523 (MTKAASFVLL…GVLTFDTDVF (185 aa)) form the PCI domain. Residues 606–910 (ERRVIIEKKK…LRAKRAGLSE (305 aa)) adopt a coiled-coil conformation. Basic and acidic residues-rich tracts occupy residues 619–632 (TDAL…EETR) and 809–901 (KAAE…EARL). 2 disordered regions span residues 619–649 (TDAL…QRLA) and 809–1035 (KAAE…QQNQ). Composition is skewed to low complexity over residues 943–953 (KEAAGGAAPEA) and 988–1004 (PPSQ…QTPP).

It belongs to the eIF-3 subunit A family. As to quaternary structure, component of the eukaryotic translation initiation factor 3 (eIF-3) complex.

The protein localises to the cytoplasm. Its function is as follows. RNA-binding component of the eukaryotic translation initiation factor 3 (eIF-3) complex, which is involved in protein synthesis of a specialized repertoire of mRNAs and, together with other initiation factors, stimulates binding of mRNA and methionyl-tRNAi to the 40S ribosome. The eIF-3 complex specifically targets and initiates translation of a subset of mRNAs involved in cell proliferation. In Emericella nidulans (strain FGSC A4 / ATCC 38163 / CBS 112.46 / NRRL 194 / M139) (Aspergillus nidulans), this protein is Eukaryotic translation initiation factor 3 subunit A (tif32).